We begin with the raw amino-acid sequence, 837 residues long: Granulocyte colony-stimulating factor receptor (837 aa).

The first 25 residues, 1–25, serve as a signal peptide directing secretion; that stretch reads MVGLGACTLTGVTLIFLLLPRSLES. 2 disulfide bridges follow: Cys26–Cys52 and Cys46–Cys102. In terms of domain architecture, Ig-like C2-type spans 26–118; the sequence is CGHIEISPPV…SVQLLDQAEL (93 aa). The Extracellular segment spans residues 26-626; sequence CGHIEISPPV…LTLRTLDPSD (601 aa). N-linked (GlcNAc...) asparagine glycosylation is found at Asn51, Asn94, and Asn129. Fibronectin type-III domains are found at residues 126 to 231, 236 to 331, 334 to 433, 434 to 529, and 530 to 624; these read SPSN…LEPP, LDIG…LRPT, APTI…NEGP, AVTG…GERA, and PPHA…TLDP. 5 disulfide bridges follow: Cys132–Cys143, Cys168–Cys219, Cys178–Cys187, Cys249–Cys296, and Cys267–Cys310. N-linked (GlcNAc...) asparagine glycosylation is found at Asn186 and Asn279. Residues 319–323 carry the WSXWS motif motif; sequence WSPWS. Asn392, Asn408, Asn474, Asn487, Asn582, and Asn613 each carry an N-linked (GlcNAc...) asparagine glycan. A helical transmembrane segment spans residues 627–650; that stretch reads LNIFLGILCLVLLSTTCVVTWLCC. Topologically, residues 651 to 837 are cytoplasmic; sequence KRRGKTSFWS…VHGVEEQGGF (187 aa). Positions 658 to 666 match the Box 1 motif motif; that stretch reads FWSDVPDPA.

Belongs to the type I cytokine receptor family. Type 2 subfamily. In terms of assembly, homodimer. The dimeric receptor binds two CSF3 molecules. Interacts with CEACAM1; down-regulates the CSF3R-STAT3 pathway through recruitment of PTPN6 that dephosphorylates CSF3R. N-glycosylated. Found in bone marrow.

It localises to the membrane. Functionally, receptor for granulocyte colony-stimulating factor (CSF3). In addition it may function in some adhesion or recognition events at the cell surface. The chain is Granulocyte colony-stimulating factor receptor (Csf3r) from Mus musculus (Mouse).